The sequence spans 207 residues: MPHSHCHSLRSFHNAPPLSAITHGTNPITFEDRLCLPSSFHSRTCFLDNFQETCNETTSCQMTNCEQDLFTDDSCVQSNCFPGVVQTTYSNSRPCERTACQSESSSAGLACVSQPCQSESTQQMGFVAQSCQPASLKGNSCPPKTSKSKNFETLERASSQCQCQSQNPESSSCRPLVNVAPEPQLLESSPGVEPTCCVTGGSQLPSK.

The interval 184–207 (QLLESSPGVEPTCCVTGGSQLPSK) is disordered.

This sequence belongs to the PMG family. In terms of assembly, interacts with hair keratins.

In terms of biological role, in the hair cortex, hair keratin intermediate filaments are embedded in an interfilamentous matrix, consisting of hair keratin-associated proteins (KRTAP), which are essential for the formation of a rigid and resistant hair shaft through their extensive disulfide bond cross-linking with abundant cysteine residues of hair keratins. The matrix proteins include the high-sulfur and high-glycine-tyrosine keratins. The protein is Keratin-associated protein 27-1 (KRTAP27-1) of Homo sapiens (Human).